Reading from the N-terminus, the 603-residue chain is Protein SHORT-ROOT 2 (603 aa).

2 disordered regions span residues 11-58 and 106-140; these read HHHH…HSHS and DFSS…SSAG. The segment covering 31 to 44 has biased composition (low complexity); it reads SYPSSRGSTSSPSS. The span at 45 to 58 shows a compositional bias: basic residues; sequence HHTHNHTYYHHSHS. The span at 108-125 shows a compositional bias: low complexity; that stretch reads SSSSSSRQFHSGTGAPSS. The region spanning 179 to 602 is the GRAS domain; sequence AAPSSSGRWA…QPVVWASAWK (424 aa). Positions 186-249 are leucine repeat I (LRI); it reads RWAAQLLMEC…LTTSGPRTLR (64 aa). Positions 268–354 are VHIID; that stretch reads ALKFQELSPW…DTPHLSITTV (87 aa). A VHIID motif is present at residues 318–322; sequence LHILD. The leucine repeat II (LRII) stretch occupies residues 370-406; it reads EIGQRLEKFARLMGVPFSFRAVHHAGDLADLDLAALD. The tract at residues 416–514 is PFYRE; it reads LAVNCVNALR…ERAVGRAIVD (99 aa). Residues 517–602 form an SAW region; sequence SCPASQSAER…QPVVWASAWK (86 aa).

It belongs to the GRAS family. In terms of assembly, does not interact with SCR1.

Its subcellular location is the nucleus. Its function is as follows. Putative transcription factor involved in asymmetric cell division. In Oryza sativa subsp. indica (Rice), this protein is Protein SHORT-ROOT 2 (SHR2).